The chain runs to 656 residues: MSSRRRSSSRRSGEPSTVIYIPSSNEDTPADEEAEDSVFTSTRARSATEDLDRMEAGLSPYSVSSDAPSSFELVRETGGTGAAKKPSEKKRSSSRRQPQIAAGAPRGSPATPKAGKSPKVSRPPSVPSLPENGAGGGGDDNSSSGGSSSRTTSNSSRSTSPVAPGEPSAAEGDEFSFCDSDIEDFERECYRVSVADNLGFEPSVVAPQHVEYLKFVLQDFDVQHLRRLNECIPMPAFALTSLVDPVLNNVAPGERDLTRRIITHAVIINYYYVAQKKARHMVEAIRTTVRGDTVRRVAAQVNNQSRSGRAAALALHFLTSRKGVTDGQYATSLRRLDEELRHRGTPESPRLTEVYQTLRDYNVLFYTAHYTSRGALYLYRQNLQRLNENHRGMLRLLSVEEICEEHTLNDLAFLVGVELMITHFQRTIRVLRCYLQHQLQSISELCYLIYVQLPSLREDYAQLSDVIYWAVSQNYDYALYASTPALFDFLRVVRQQDAFICTDYVYCALRLLACPDRPIIGDTGGSSSSQRLVGEFMVRDPLLRDPRATHLRQKLITRDICVARLQAQPSSRHIPVEHTGVSSVTLLKIFSQVPPDEREEDTLREMALKAFMEANGNHPEQICRSPPPPLPPRDYPQRDERDRHRRDRRDSGEYCC.

Disordered regions lie at residues 1–174 (MSSR…EGDE) and 615–656 (NGNH…EYCC). Over residues 46-55 (SATEDLDRME) the composition is skewed to basic and acidic residues. 2 stretches are compositionally biased toward low complexity: residues 59 to 70 (SPYSVSSDAPSS) and 140 to 160 (DNSS…RSTS). Residues 625-634 (SPPPPLPPRD) are compositionally biased toward pro residues. The span at 635–656 (YPQRDERDRHRRDRRDSGEYCC) shows a compositional bias: basic and acidic residues.

It belongs to the herpesviridae pp85 family. In terms of processing, phosphorylated.

It is found in the virion tegument. The protein localises to the host cytoplasm. The sequence is that of Phosphoprotein 85 (UL25) from Homo sapiens (Human).